The chain runs to 507 residues: 2,3-bisphosphoglycerate-independent phosphoglycerate mutase (507 aa).

Asp-13 and Ser-63 together coordinate Mn(2+). The Phosphoserine intermediate role is filled by Ser-63. Substrate is bound by residues His-122, 152 to 153 (RD), Arg-184, Arg-190, 256 to 259 (RADR), and Lys-330. Residues Asp-397, His-401, Asp-438, His-439, and His-457 each coordinate Mn(2+).

Belongs to the BPG-independent phosphoglycerate mutase family. Monomer. Mn(2+) serves as cofactor.

It carries out the reaction (2R)-2-phosphoglycerate = (2R)-3-phosphoglycerate. It participates in carbohydrate degradation; glycolysis; pyruvate from D-glyceraldehyde 3-phosphate: step 3/5. Its function is as follows. Catalyzes the interconversion of 2-phosphoglycerate and 3-phosphoglycerate. This chain is 2,3-bisphosphoglycerate-independent phosphoglycerate mutase, found in Chromobacterium violaceum (strain ATCC 12472 / DSM 30191 / JCM 1249 / CCUG 213 / NBRC 12614 / NCIMB 9131 / NCTC 9757 / MK).